We begin with the raw amino-acid sequence, 663 residues long: Polyunsaturated fatty acid lipoxygenase ALOX15 (663 aa).

In terms of domain architecture, PLAT spans 2–115 (GVYRVCVSTG…VQSLPVGTGC (114 aa)). The region spanning 116 to 663 (TTVGDPQGLF…PSIVENSVAI (548 aa)) is the Lipoxygenase domain. Residues H361, H366, H541, H545, and I663 each contribute to the Fe cation site.

The protein belongs to the lipoxygenase family. In terms of assembly, interacts with PEBP1; in response to IL13/interleukin-13, prevents the interaction of PEBP1 with RAF1 to activate the ERK signaling cascade. Fe cation serves as cofactor. In terms of tissue distribution, detected in reticulocytes (at protein level).

Its subcellular location is the cytoplasm. The protein resides in the cytosol. The protein localises to the cell membrane. It localises to the lipid droplet. The enzyme catalyses (5Z,8Z,11Z,14Z)-eicosatetraenoate + O2 = (12S)-hydroperoxy-(5Z,8Z,10E,14Z)-eicosatetraenoate. It catalyses the reaction (5Z,8Z,11Z,14Z)-eicosatetraenoate + O2 = (15S)-hydroperoxy-(5Z,8Z,11Z,13E)-eicosatetraenoate. It carries out the reaction (9Z,12Z)-octadecadienoate + O2 = (13S)-hydroperoxy-(9Z,11E)-octadecadienoate. The catalysed reaction is (5Z,8Z,11Z,14Z)-eicosatetraenoate + 2 O2 = (14R,15S)-dihydroperoxy-(5Z,8Z,10E,12E)-eicosatetraenoate. The enzyme catalyses (5Z,8Z,11Z,14Z)-eicosatetraenoate + 2 O2 = (8S,15S)-dihydroperoxy-(5Z,9E,11Z,13E)-eicosatetraenoate. It catalyses the reaction (14S,15R)-epoxy-(5Z,8Z,11Z)-eicosatrienoate + O2 = (8S)-hydroperoxy-(14S,15R)-epoxy-(5Z,9E,11Z)-eicosatrienoate. It carries out the reaction (14S,15R)-epoxy-(5Z,8Z,11Z)-eicosatrienoate + O2 = (12S)-hydroperoxy-(14S,15R)-epoxy-(5Z,8Z,10E)-eicosatrienoate. The catalysed reaction is (14R,15S)-epoxy-(5Z,8Z,11Z)-eicosatrienoate + O2 = (5S)-hydroperoxy-(14R,15S)-epoxy-(6E,8Z,11Z)-eicosatrienoate. The enzyme catalyses (14R,15S)-epoxy-(5Z,8Z,11Z)-eicosatrienoate + O2 = (12S)-hydroperoxy-(14R,15S)-epoxy-(5Z,8Z,10E)-eicosatrienoate. It catalyses the reaction (15R)-hydroperoxy-(5Z,8Z,11Z,13E)-eicosatetraenoate = 15-oxo-(5Z,8Z,11Z,13E)-eicosatetraenoate + H2O. It carries out the reaction (15S)-hydroperoxy-(5Z,8Z,11Z,13E)-eicosatetraenoate = (14S,15S)-epoxy-(5Z,8Z,10E,12E)-eicosatetraenoate + H2O. The catalysed reaction is (12S)-hydroperoxy-(5Z,8Z,10E,14Z)-eicosatetraenoate = (8S)-hydroxy-(11S,12S)-epoxy-(5Z,9E,14Z)-eicosatrienoate. The enzyme catalyses (4Z,7Z,10Z,13Z,16Z)-docosapentaenoate + O2 = 14-hydroperoxy-(4Z,7Z,10Z,12E,16Z)-docosapentaenoate. It catalyses the reaction (7Z,10Z,13Z,16Z,19Z)-docosapentaenoate + O2 = 14-hydroperoxy-(7Z,10Z,12E,16Z,19Z)-docosapentaenoate. It carries out the reaction (4Z,7Z,10Z,13Z,16Z,19Z)-docosahexaenoate + O2 = (14S)-hydroperoxy-(4Z,7Z,10Z,12E,16Z,19Z)-docosahexaenoate. The catalysed reaction is (4Z,7Z,10Z,13Z,16Z,19Z)-docosahexaenoate + O2 = (17S)-hydroperoxy-(4Z,7Z,10Z,13Z,15E,19Z)-docosahexaenoate. The enzyme catalyses (7S)-hydroperoxy-(4Z,8E,10Z,13Z,16Z,19Z)-docosahexaenoate + O2 = (7S,14S)-dihydroperoxy-(4Z,8E,10Z,12E,16Z,19Z)-docosahexaenoate. It catalyses the reaction (7S)-hydroperoxy-(4Z,8E,10Z,13Z,16Z,19Z)-docosahexaenoate + O2 = (7S,17S)-dihydroperoxy-(4Z,8E,10Z,13Z,15E,19Z)-docosahexaenoate. It carries out the reaction (4Z,7Z,10Z,13Z,16Z,19Z)-docosahexaenoate + O2 = (11S)-hydroperoxy-(4Z,7Z,9E,13Z,16Z,19Z)-docosahexaenoate. The catalysed reaction is N-(5Z,8Z,11Z,14Z)-eicosatetraenoyl-taurine + O2 = N-(15S)-hydroperoxy-(5Z,8Z,11Z,13E)-eicosatetraenoyl-taurine. The enzyme catalyses N-(5Z,8Z,11Z,14Z)-eicosatetraenoyl-gamma-aminobutanoate + O2 = N-(15S)-hydroperoxy-(5Z,8Z,11Z,13E)-eicosatetraenoyl-gamma-aminobutanoate. It catalyses the reaction N-(5Z,8Z,11Z,14Z)-eicosatetraenoyl-glycine + O2 = N-(15S)-hydroperoxy-(5Z,8Z,11Z,13E)-eicosatetraenoyl-glycine. It carries out the reaction N-(5Z,8Z,11Z,14Z)-eicosatetraenoyl-L-alanine + O2 = N-(15S)-hydroperoxy-(5Z,8Z,11Z,13E)-eicosatetraenoyl-alanine. The catalysed reaction is N-(5Z,8Z,11Z,14Z)-eicosatetraenoyl-taurine + O2 = N-(12S)-hydroperoxy-(5Z,8Z,10E,14Z)-eicosatetraenoyl-taurine. The enzyme catalyses N-(5Z,8Z,11Z,14Z)-eicosatetraenoyl-gamma-aminobutanoate + O2 = N-(12S)-hydroperoxy-(5Z,8Z,10E,14Z)-eicosatetraenoyl-gamma-aminobutanoate. It catalyses the reaction N-(5Z,8Z,11Z,14Z)-eicosatetraenoyl-glycine + O2 = N-(12S)-hydroperoxy-(5Z,8Z,10E,14Z)-eicosatetraenoyl-glycine. It carries out the reaction N-(5Z,8Z,11Z,14Z)-eicosatetraenoyl-L-alanine + O2 = N-(12S)-hydroperoxy-(5Z,8Z,10E,14Z)-eicosatetraenoyl-alanine. The protein operates within lipid metabolism; hydroperoxy eicosatetraenoic acid biosynthesis. Non-heme iron-containing dioxygenase that catalyzes the stereo-specific peroxidation of free and esterified polyunsaturated fatty acids generating a spectrum of bioactive lipid mediators. It inserts peroxyl groups at C12 or C15 of arachidonate ((5Z,8Z,11Z,14Z)-eicosatetraenoate) producing both 12-hydroperoxyeicosatetraenoate/12-HPETE and 15-hydroperoxyeicosatetraenoate/15-HPETE. It may then act on 12-HPETE to produce hepoxilins, which may show pro-inflammatory properties. Can also peroxidize linoleate ((9Z,12Z)-octadecadienoate) to 13-hydroperoxyoctadecadienoate. May participate in the sequential oxidations of DHA ((4Z,7Z,10Z,13Z,16Z,19Z)-docosahexaenoate) to generate specialized pro-resolving mediators (SPMs)like resolvin D5 ((7S,17S)-diHPDHA) and (7S,14S)-diHPDHA, that actively down-regulate the immune response and have anti-aggregation properties with platelets. Can convert epoxy fatty acids to hydroperoxy-epoxides derivatives followed by an intramolecular nucleophilic substitution leading to the formation of monocyclic endoperoxides. Plays an important role during the maintenance of self-tolerance by peroxidizing membrane-bound phosphatidylethanolamine which can then signal the sorting process for clearance of apoptotic cells during inflammation and prevent an autoimmune response. In addition to its role in the immune and inflammatory responses, this enzyme may play a role in epithelial wound healing in the cornea through production of lipoxin A4 (LXA(4)) and docosahexaenoic acid-derived neuroprotectin D1 (NPD1; 10R,17S-HDHA), both lipid autacoids exhibit anti-inflammatory and neuroprotective properties. Furthermore, it may regulate actin polymerization which is crucial for several biological processes such as the phagocytosis of apoptotic cells. It is also implicated in the generation of endogenous ligands for peroxisome proliferator activated receptor (PPAR-gamma), hence modulating macrophage development and function. It may also exert a negative effect on skeletal development by regulating bone mass through this pathway. As well as participates in ER stress and downstream inflammation in adipocytes, pancreatic islets, and liver. Finally, it is also involved in the cellular response to IL13/interleukin-13. This chain is Polyunsaturated fatty acid lipoxygenase ALOX15, found in Oryctolagus cuniculus (Rabbit).